The sequence spans 493 residues: Transcript termination protein A18 (493 aa).

The Helicase ATP-binding domain occupies 100–256 (MIELKRPLYI…NSIINIAKLS (157 aa)). 113–120 (LACGFGKT) is a binding site for ATP. Residues 206 to 209 (DESH) carry the DESH box motif.

The protein belongs to the helicase family. Poxviruses subfamily. As to quaternary structure, interacts with G2. Might be part of a transcription complex composed at least of G2, A18, and H5.

The protein resides in the virion. In terms of biological role, DNA helicase which seems to act as a postreplicative transcription termination factor. Involved in ATP-dependent release of nascent RNA. Forms a stable complex with single-stranded DNA, and to a lesser extent RNA. The polypeptide is Transcript termination protein A18 (Cowpox virus (strain GRI-90 / Grishak) (CPV)).